A 1937-amino-acid polypeptide reads, in one-letter code: Myosin-8 (1937 aa).

The Myosin N-terminal SH3-like domain occupies aspartate 35–proline 84. 2 positions are modified to phosphothreonine: threonine 66 and threonine 71. The Myosin motor domain occupies aspartate 88–aspartate 781. Lysine 132 is subject to N6,N6,N6-trimethyllysine. Residue glycine 181–threonine 188 participates in ATP binding. Residue tyrosine 389 is modified to Phosphotyrosine. Serine 392 carries the phosphoserine modification. The residue at position 419 (threonine 419) is a Phosphothreonine. Tyrosine 424 is subject to Phosphotyrosine. Serine 625 is subject to Phosphoserine. Positions leucine 658–glutamate 680 are actin-binding. Histidine 756 carries the pros-methylhistidine modification. The tract at residues lysine 760–glycine 774 is actin-binding. In terms of domain architecture, IQ spans aspartate 781–alanine 813. A coiled-coil region spans residues leucine 842–glutamate 1937. Phosphoserine is present on residues serine 1091 and serine 1095. Residues glutamate 1126–leucine 1146 are disordered. The segment covering alanine 1127 to leucine 1146 has biased composition (basic and acidic residues). Phosphoserine occurs at positions 1161, 1236, 1242, and 1260. 2 positions are modified to phosphothreonine: threonine 1264 and threonine 1285. Phosphoserine is present on residues serine 1291, serine 1302, and serine 1305. Phosphotyrosine is present on tyrosine 1463. The residue at position 1466 (threonine 1466) is a Phosphothreonine. Serine 1473 is subject to Phosphoserine. Phosphotyrosine is present on tyrosine 1491. Residue serine 1494 is modified to Phosphoserine. Threonine 1500 is subject to Phosphothreonine. At serine 1513 the chain carries Phosphoserine. Threonine 1516 bears the Phosphothreonine mark. Serine 1553, serine 1573, serine 1602, serine 1713, and serine 1725 each carry phosphoserine. Threonine 1729 is subject to Phosphothreonine. Serine 1738 carries the post-translational modification Phosphoserine.

This sequence belongs to the TRAFAC class myosin-kinesin ATPase superfamily. Myosin family. In terms of assembly, muscle myosin is a hexameric protein that consists of 2 heavy chain subunits (MHC), 2 alkali light chain subunits (MLC) and 2 regulatory light chain subunits (MLC-2).

It localises to the cytoplasm. The protein localises to the myofibril. Its function is as follows. Muscle contraction. This Homo sapiens (Human) protein is Myosin-8 (MYH8).